The primary structure comprises 305 residues: Carbonic anhydrase 4 (305 aa).

A signal peptide spans 1-17; it reads MQLLLALLALAYVAPST. The Alpha-carbonic anhydrase domain maps to 20 to 278; it reads SGWCYEIQTK…LGKRQVFKSH (259 aa). Disulfide bonds link C23-C35 and C45-C222. The active-site Proton donor/acceptor is H87. Positions 114 and 116 each coordinate Zn(2+). N123 carries an N-linked (GlcNAc...) asparagine glycan. H139 serves as a coordination point for Zn(2+). The N-linked (GlcNAc...) asparagine glycan is linked to N214. 218–219 serves as a coordination point for substrate; it reads TT. S277 is lipidated: GPI-anchor amidated serine. The propeptide at 278–305 is removed in mature form; sequence HAPGQLLSLPLPTLLVPTLTCLVANFLQ.

The protein belongs to the alpha-carbonic anhydrase family. As to quaternary structure, interacts with SLC4A4. Zn(2+) serves as cofactor.

It is found in the cell membrane. It catalyses the reaction hydrogencarbonate + H(+) = CO2 + H2O. With respect to regulation, inhibited by acetazolamide. In terms of biological role, catalyzes the reversible hydration of carbon dioxide into bicarbonate and protons and thus is essential to maintaining intracellular and extracellular pH. May stimulate the sodium/bicarbonate transporter activity of SLC4A4 that acts in pH homeostasis. It is essential for acid overload removal from the retina and retina epithelium, and acid release in the choriocapillaris in the choroid. The sequence is that of Carbonic anhydrase 4 (Ca4) from Mus musculus (Mouse).